The primary structure comprises 156 residues: Large ribosomal subunit protein eL24 (156 aa).

Residues 110–123 (RAAKEKQKQKELEK) are compositionally biased toward basic and acidic residues. The interval 110 to 156 (RAAKEKQKQKELEKKAKKVEKKKPTLAPKQKAAKITQKPAPRVGGKR) is disordered.

Belongs to the eukaryotic ribosomal protein eL24 family.

The protein is Large ribosomal subunit protein eL24 (RPL24) of Schistosoma japonicum (Blood fluke).